A 329-amino-acid polypeptide reads, in one-letter code: GTP 3',8-cyclase (329 aa).

Positions 8 to 234 constitute a Radical SAM core domain; sequence AFARKFYYLR…QLRQRSDGPA (227 aa). GTP is bound at residue arginine 17. 2 residues coordinate [4Fe-4S] cluster: cysteine 24 and cysteine 28. An S-adenosyl-L-methionine-binding site is contributed by tyrosine 30. Residue cysteine 31 coordinates [4Fe-4S] cluster. Arginine 68 provides a ligand contact to GTP. S-adenosyl-L-methionine is bound at residue glycine 72. Residue threonine 99 participates in GTP binding. Serine 123 is a binding site for S-adenosyl-L-methionine. Lysine 160 contributes to the GTP binding site. Methionine 194 contributes to the S-adenosyl-L-methionine binding site. The [4Fe-4S] cluster site is built by cysteine 257 and cysteine 260. 262 to 264 serves as a coordination point for GTP; it reads RLR. Cysteine 274 provides a ligand contact to [4Fe-4S] cluster.

The protein belongs to the radical SAM superfamily. MoaA family. As to quaternary structure, monomer and homodimer. The cofactor is [4Fe-4S] cluster.

It carries out the reaction GTP + AH2 + S-adenosyl-L-methionine = (8S)-3',8-cyclo-7,8-dihydroguanosine 5'-triphosphate + 5'-deoxyadenosine + L-methionine + A + H(+). It participates in cofactor biosynthesis; molybdopterin biosynthesis. Its function is as follows. Catalyzes the cyclization of GTP to (8S)-3',8-cyclo-7,8-dihydroguanosine 5'-triphosphate. The chain is GTP 3',8-cyclase from Escherichia fergusonii (strain ATCC 35469 / DSM 13698 / CCUG 18766 / IAM 14443 / JCM 21226 / LMG 7866 / NBRC 102419 / NCTC 12128 / CDC 0568-73).